Reading from the N-terminus, the 154-residue chain is Large ribosomal subunit protein uL13 (154 aa).

Belongs to the universal ribosomal protein uL13 family. Part of the 50S ribosomal subunit.

Its function is as follows. This protein is one of the early assembly proteins of the 50S ribosomal subunit, although it is not seen to bind rRNA by itself. It is important during the early stages of 50S assembly. This is Large ribosomal subunit protein uL13 from Cereibacter sphaeroides (strain ATCC 17029 / ATH 2.4.9) (Rhodobacter sphaeroides).